Reading from the N-terminus, the 231-residue chain is Large ribosomal subunit protein uL1 (231 aa).

This sequence belongs to the universal ribosomal protein uL1 family. As to quaternary structure, part of the 50S ribosomal subunit.

In terms of biological role, binds directly to 23S rRNA. The L1 stalk is quite mobile in the ribosome, and is involved in E site tRNA release. Its function is as follows. Protein L1 is also a translational repressor protein, it controls the translation of the L11 operon by binding to its mRNA. The sequence is that of Large ribosomal subunit protein uL1 from Moorella thermoacetica (strain ATCC 39073 / JCM 9320).